A 482-amino-acid chain; its full sequence is Glutamate--tRNA ligase 2 (482 aa).

A 'HIGH' region motif is present at residues 8-18 (PSPTGQLHIGG). The short motif at 249-253 (KLSKR) is the 'KMSKS' region element. Lys-252 contributes to the ATP binding site.

Belongs to the class-I aminoacyl-tRNA synthetase family. Glutamate--tRNA ligase type 1 subfamily. Monomer.

It localises to the cytoplasm. The enzyme catalyses tRNA(Glu) + L-glutamate + ATP = L-glutamyl-tRNA(Glu) + AMP + diphosphate. Its function is as follows. Catalyzes the attachment of glutamate to tRNA(Glu) in a two-step reaction: glutamate is first activated by ATP to form Glu-AMP and then transferred to the acceptor end of tRNA(Glu). The protein is Glutamate--tRNA ligase 2 of Caldicellulosiruptor saccharolyticus (strain ATCC 43494 / DSM 8903 / Tp8T 6331).